Here is a 449-residue protein sequence, read N- to C-terminus: MEKVNEERDAVFEDHIGDRRRSVRSLLEEAFADEMEKTSYDVEVADTPQPHIPIRFRHPPIAGPVHDVFGDAIHDIFQKMMKRGQAVDFCHWVSHLIATEIDEKFSEVAFRDVQYNPDIYVTDSTTEAKKLFNDKIWPAIDKILQQNAETCPILSEKWSGIHVSGDQLKGQRHKQEDRFLAYPNGQYMDRGEDPISVLAVFDGHGGHECSQYAAGHLWETWLEVRKSRDPSDSLEDQLRKSLELLDERMTVRSVKECWKGGSTAVCCAIDMDQKLMALAWLGDSPGYVMSNIEFRQLTRGHSPSDEREARRVEEAGGQLFVIGGELRVNGVLNLTRALGDVPGRPMISNEPETCQVPIESSDYLVLLACDGISDVFNERDLYQLVEAFANDYPVEDYAELSRFICTKAIEAGSADNVSVVIGFLRPPQDVWKLMKHESDDEDSDVTDEE.

The interval E28–E34 is interaction with fem-1 and fem-3. The segment at I54 to F56 is interaction with fem-3. The PPM-type phosphatase domain maps to G160–L424. Mg(2+) is bound by residues D202, G203, D370, and D415.

Belongs to the PP2C family. In terms of assembly, component of a complex containing fem-1, fem-2 and fem-3. Interacts (via N-terminus) with fem-1 and fem-3. Component of the CBC(fem-1) E3 ubiquitin-protein ligase complex, at least composed of cul-2, elc-1, tra-1, fem-1, fem-2 and fem-3; mediates the ubiquitination and subsequent proteasomal degradation of tra-1. Interacts with tra-1. Interacts with sel-10. The cofactor is Mg(2+). Mn(2+) serves as cofactor.

It carries out the reaction O-phospho-L-seryl-[protein] + H2O = L-seryl-[protein] + phosphate. The enzyme catalyses O-phospho-L-threonyl-[protein] + H2O = L-threonyl-[protein] + phosphate. Dephosphorylates auto-phosphorylated Ca(2+)/calmodulin-dependent protein kinase unc-43/CAMKII in vitro. Involved in the regulation of sex determination. Together with fem-3, required for male sexual development by promoting the proteasomal-mediated degradation of tra-1, a transcription repressor of male-specific genes. Promotes apoptosis. The chain is Protein phosphatase fem-2 from Caenorhabditis elegans.